The following is a 435-amino-acid chain: ATP-dependent protease ATPase subunit HslU (435 aa).

Residues Ile-18, 60 to 65 (GVGKTE), Asp-248, Glu-313, and Arg-385 each bind ATP.

Belongs to the ClpX chaperone family. HslU subfamily. As to quaternary structure, a double ring-shaped homohexamer of HslV is capped on each side by a ring-shaped HslU homohexamer. The assembly of the HslU/HslV complex is dependent on binding of ATP.

The protein localises to the cytoplasm. Functionally, ATPase subunit of a proteasome-like degradation complex; this subunit has chaperone activity. The binding of ATP and its subsequent hydrolysis by HslU are essential for unfolding of protein substrates subsequently hydrolyzed by HslV. HslU recognizes the N-terminal part of its protein substrates and unfolds these before they are guided to HslV for hydrolysis. This chain is ATP-dependent protease ATPase subunit HslU, found in Rhizobium etli (strain ATCC 51251 / DSM 11541 / JCM 21823 / NBRC 15573 / CFN 42).